The following is a 282-amino-acid chain: Pantothenate synthetase (282 aa).

30 to 37 is an ATP binding site; sequence MGYLHEGH. H37 functions as the Proton donor in the catalytic mechanism. Q61 is a (R)-pantoate binding site. Q61 serves as a coordination point for beta-alanine. Position 147 to 150 (147 to 150) interacts with ATP; that stretch reads GMKD. Q153 provides a ligand contact to (R)-pantoate. ATP contacts are provided by residues V176 and 184–187; that span reads KSSR.

Belongs to the pantothenate synthetase family. As to quaternary structure, homodimer.

It localises to the cytoplasm. The catalysed reaction is (R)-pantoate + beta-alanine + ATP = (R)-pantothenate + AMP + diphosphate + H(+). It functions in the pathway cofactor biosynthesis; (R)-pantothenate biosynthesis; (R)-pantothenate from (R)-pantoate and beta-alanine: step 1/1. Its function is as follows. Catalyzes the condensation of pantoate with beta-alanine in an ATP-dependent reaction via a pantoyl-adenylate intermediate. The polypeptide is Pantothenate synthetase (Bacillus cereus (strain G9842)).